The primary structure comprises 617 residues: Estrogen receptor (617 aa).

Residues 1 to 54 (MSEEQARAEAPAGARQRRRSELEGYSVSLASLKLSPMYPEEEQRTTGGISSTAH) form a disordered region. The interval 1-186 (MSEEQARAEA…AIGLVKEIRY (186 aa)) is modulating. 2 consecutive NR C4-type zinc fingers follow at residues 187–207 (CSVC…CEGC) and 223–247 (CPAT…LRKC). Positions 187 to 252 (CSVCSDYASG…RLRKCYEVGM (66 aa)) form a DNA-binding region, nuclear receptor. The segment at 253-315 (MKGGFRKERG…GGGVADVVCM (63 aa)) is hinge. The tract at residues 269–303 (NRRPSGLKERERGYSKAQSGSDVREALPQDGQSSS) is disordered. An NR LBD domain is found at 316–552 (SPEQVLLLLL…DLLLEMLDAH (237 aa)). A disordered region spans residues 568 to 617 (VSSSPTTTATTPTTNTTTTTTTTTHHPSNGSTCPADLPSNPPGPGQSPSP). Positions 573 to 591 (TTTATTPTTNTTTTTTTTT) are enriched in low complexity. Positions 606–617 (SNPPGPGQSPSP) are enriched in pro residues.

It belongs to the nuclear hormone receptor family. NR3 subfamily. Binds DNA as a homodimer. Can form a heterodimer with ER-beta. In terms of tissue distribution, ovary and testis.

It is found in the nucleus. Its function is as follows. The steroid hormones and their receptors are involved in the regulation of eukaryotic gene expression and affect cellular proliferation and differentiation in target tissues. In Ictalurus punctatus (Channel catfish), this protein is Estrogen receptor (esr1).